We begin with the raw amino-acid sequence, 462 residues long: Argininosuccinate lyase (462 aa).

It belongs to the lyase 1 family. Argininosuccinate lyase subfamily.

The protein localises to the cytoplasm. It catalyses the reaction 2-(N(omega)-L-arginino)succinate = fumarate + L-arginine. The protein operates within amino-acid biosynthesis; L-arginine biosynthesis; L-arginine from L-ornithine and carbamoyl phosphate: step 3/3. This Streptococcus agalactiae serotype V (strain ATCC BAA-611 / 2603 V/R) protein is Argininosuccinate lyase.